Consider the following 2057-residue polypeptide: Myosin heavy chain, non-muscle (2057 aa).

In terms of domain architecture, Myosin N-terminal SH3-like spans 78-128 (HRSVLVWVPHENQGFVAASIKREHGDEVEVELAETGKRVMILRDDIQKMNP). The 736-residue stretch at 132–867 (DKVEDMAELT…VLAHLEEERD (736 aa)) folds into the Myosin motor domain. 225-232 (GESGAGKT) provides a ligand contact to ATP. The segment at 250–260 (PKGSGAVPHPA) is 25 kDa/50 kDa junction. The segment at 722–734 (DTQFGARTRKGMF) is 50 kDa/20 kDa junction. The segment at 745–767 (LAKLMDTLRNTNPNFVRCIIPNH) is actin-binding. The tract at residues 782–798 (QLRCNGVLEGIRICRQG) is reactive sulfhydryl/actin-binding. Residues 870–899 (ISDLIVNFQAFCRGFLARRNYQKRLQQLNA) enclose the IQ domain. A coiled-coil region spans residues 926-2016 (KPLLEVTKQE…SLKTKLRRTG (1091 aa)). Disordered regions lie at residues 1124 to 1144 (EERL…KRKI), 1782 to 1802 (SSER…EEIA), and 2008 to 2057 (LKTK…DSAN). The segment at 1343–2010 (SQIAELQVKL…MNREINSLKT (668 aa)) is alpha-helical tailpiece (LMM). A light meromyosin (LMM) region spans residues 1343-2057 (SQIAELQVKL…ESLDGEDSAN (715 aa)). Basic and acidic residues predominate over residues 1782 to 1792 (SSERARRAAET). The globular tailpiece stretch occupies residues 2011–2057 (KLRRTGGIGLSSSRLTGTPSSKRAGGGGGSDDSSVQDESLDGEDSAN). S2021 and S2022 each carry phosphoserine. Residues 2044 to 2057 (SVQDESLDGEDSAN) show a composition bias toward acidic residues.

It belongs to the TRAFAC class myosin-kinesin ATPase superfamily. Myosin family. Interacts with sau. Interacts with ck and Ubr3. Post-translationally, ubiquitinated. In Johnston's organ, expressed in neurons and scolopale cells.

It is found in the cell projection. It localises to the cilium. The protein resides in the cytoplasm. Functionally, nonmuscle myosin appears to be responsible for cellularization. Required for morphogenesis and cytokinesis. Necessary for auditory transduction: plays a role in Johnston's organ organization by acting in scolopidial apical attachment. Interaction with the myosin ck may be important for this function. Localizes to and defines the trailing edge of cells during larval epidermal wound healing. This process is dependent on the phosphatidylinositol 4-phosphate 5-kinase sktl/skittles. This chain is Myosin heavy chain, non-muscle (zip), found in Drosophila melanogaster (Fruit fly).